The sequence spans 377 residues: MGNILRCFKGDDDGGDHYPYYKPTSRPHYQPPHYHGQPAAPPAPPQQQPLGPHGVTPSTVGVAALAHDLLNFESTSMVPDGLSQHVVSSRKAQVKWYQKLLEAYKNTTPPPKTPADAAQLIARALNMIQRADLEITSNYVSPQGILEFYNFPIPSLPSASSNYQPSSLPEGVQFVLNTLPVYDKCIGDGDGFTAYVSTTDPRESANVPLEVHELVIARTQARKCRDYQSADALLSSLDEAGYKIISCSDDEVLARKYRIRMRGIDAPELKMPYGRESRNALVKLIGGKSVKIYVYDLDQFGRYVGDIYCNNLFIQEQMLKNGHAWHFKTYDKRPEFARWEREAKAANRGLWASGNPEKPWDWRRDQRNARQDAIQVY.

Residue glycine 2 is the site of N-myristoyl glycine attachment. Residue cysteine 7 is the site of S-palmitoyl cysteine attachment. The segment at 15–57 is disordered; the sequence is GDHYPYYKPTSRPHYQPPHYHGQPAAPPAPPQQQPLGPHGVTP. Positions 27-38 are enriched in low complexity; that stretch reads PHYQPPHYHGQP. One can recognise a TNase-like domain in the interval 177 to 353; sequence NTLPVYDKCI…KAANRGLWAS (177 aa). Residue aspartate 190 participates in Ca(2+) binding. Arginine 260 is a catalytic residue. Aspartate 265 is a Ca(2+) binding site. Residues glutamate 268 and arginine 302 contribute to the active site.

It belongs to the thermonuclease family. The cofactor is Ca(2+).

It is found in the cell membrane. Enzyme that catalyzes the hydrolysis of both DNA and RNA at the 5' position of the phosphodiester bond. The chain is Probable staphylococcal-like nuclease CAN3 from Oryza sativa subsp. japonica (Rice).